The primary structure comprises 446 residues: Transcription factor Dp-2 (446 aa).

Threonine 2 is subject to N-acetylthreonine. Serine 24 bears the Phosphoserine mark. Residues 60 to 82 (PQMIISTPQRLTSSGSVLIGSPY) form an interaction with CEBPA region. The short motif at 103 to 118 (GDRKRARKFIDSDFSE) is the Nuclear localization signal element. Phosphoserine is present on serine 122. Residues 129 to 210 (GKGLRHFSMK…KKEIKWIGLP (82 aa)) mediate DNA binding. Residues 176–210 (DQKNIRRRVYDALNVLMAMNIISKEKKEIKWIGLP) carry the DEF box motif. A dimerization region spans residues 219-292 (NLEIEKQRRI…RKTVIDCSIS (74 aa)). Positions 229–261 (ERIKQKRAQLQELLLQQIAFKNLVQRNRQNEQQ) are DCB1. A DCB2 region spans residues 274–330 (LPFIIINTSRKTVIDCSISSDKFEYLFNFDNTFEIHDDIEVLKRMGMSFGLESGKCS). Low complexity predominate over residues 409–419 (SHQSSSAASHC). The disordered stretch occupies residues 409-446 (SHQSSSAASHCSESRGETPCSFNDEDEEDDEEDSSSPE). Residues 431 to 446 (NDEDEEDDEEDSSSPE) show a composition bias toward acidic residues.

It belongs to the E2F/DP family. Component of the DRTF1/E2F transcription factor complex. Forms heterodimers with E2F family members. The complex can interact with hypophosphorylated retinoblastoma protein RB1 and related proteins (RBL1 and RBL2) that inhibit the E2F transactivation domain. During the cell cycle, RB becomes phosphorylated in mid-to-late G1 phase, detaches from the DRTF1/E2F complex rendering E2F transcriptionally active. Viral oncoproteins, notably E1A, T-antigen and HPV E7, are capable of sequestering RB protein, thus releasing the active complex. Interacts with GMCL. Component of the DREAM complex (also named LINC complex) at least composed of E2F4, E2F5, LIN9, LIN37, LIN52, LIN54, MYBL1, MYBL2, RBL1, RBL2, RBBP4, TFDP1 and TFDP2. The complex exists in quiescent cells where it represses cell cycle-dependent genes. It dissociates in S phase when LIN9, LIN37, LIN52 and LIN54 form a subcomplex that binds to MYBL2. The complex TFDP2:E2F1 interacts with CEBPA; the interaction prevents CEBPA binding to target genes promoters and represses its transcriptional activity. In terms of processing, ser-24 is probably phosphorylated by CDK2. High levels in heart and skeletal muscle. Also found in placenta, kidney, brain, lung and liver. The presence as well as the abundance of the different transcripts appear to vary significantly in different tissues and cell lines.

It localises to the nucleus. Its function is as follows. Can stimulate E2F-dependent transcription. Binds DNA cooperatively with E2F family members through the E2 recognition site, 5'-TTTC[CG]CGC-3', found in the promoter region of a number of genes whose products are involved in cell cycle regulation or in DNA replication. The TFDP2:E2F complex functions in the control of cell-cycle progression from G1 to S phase. The E2F1:DP complex appears to mediate both cell proliferation and apoptosis. Blocks adipocyte differentiation by repressing CEBPA binding to its target gene promoters. The chain is Transcription factor Dp-2 (TFDP2) from Homo sapiens (Human).